The chain runs to 139 residues: QYVYPVLPYAPIHHYTVPVQVSTQYHAQDILGQFAFHHAGDNQVRTETKSFDGSVRGLYGYVDPTGKLVNVHYVADSNGFRVVGANNLPEAPSAPAVPDVKGPEPVQDTPEVVAARAAFQKSYDEAAQAAAVSPDVQVS.

The residue at position 1 (Gln1) is a Pyrrolidone carboxylic acid. Positions 31 to 92 constitute a Chitin-binding type R&amp;R domain; sequence LGQFAFHHAG…VGANNLPEAP (62 aa).

The sequence is that of Cuticle protein 6 from Blaberus craniifer (Death's head cockroach).